The sequence spans 173 residues: Glycine cleavage system H protein, mitochondrial (173 aa).

A mitochondrion-targeting transit peptide spans 1-48 (MALRAVRSVRAAVGGLRAISAPSAPCLPRPWGLRAGAVRELRTGPALL). In terms of domain architecture, Lipoyl-binding spans 66–148 (VGTVGISNFA…YEDGWLIKMT (83 aa)). Position 107 is an N6-lipoyllysine (K107).

The protein belongs to the GcvH family. In terms of assembly, interacts with GLDC. The glycine cleavage system is composed of four proteins: P (GLDC), T (GCST), L (DLD) and H (GCSH). The cofactor is (R)-lipoate.

The protein resides in the mitochondrion. The glycine cleavage system catalyzes the degradation of glycine. The H protein (GCSH) shuttles the methylamine group of glycine from the P protein (GLDC) to the T protein (GCST). Has a pivotal role in the lipoylation of enzymes involved in cellular energetics such as the mitochondrial dihydrolipoyllysine-residue acetyltransferase component of pyruvate dehydrogenase complex (DLAT), and the mitochondrial dihydrolipoyllysine-residue succinyltransferase component of 2-oxoglutarate dehydrogenase complex (DLST). The polypeptide is Glycine cleavage system H protein, mitochondrial (Bos taurus (Bovine)).